A 384-amino-acid polypeptide reads, in one-letter code: Zinc finger CCCH domain-containing protein 12 (384 aa).

Disordered regions lie at residues 1–32 and 46–81; these read MSHHRRDSGGDVVHVIPTNNPPPDNWFPNLGD and WAMNPDNTSGDNNGPPNKKTRGSPSSSSATTTSAAS. A compositionally biased stretch (polar residues) spans 50–60; the sequence is PDNTSGDNNGP. Low complexity predominate over residues 70–81; the sequence is SSSSATTTSAAS. 2 consecutive C3H1-type zinc fingers follow at residues 91 to 118 and 172 to 200; these read FFKTKLCCKFRAGTCPYITNCNFAHTVE and SFKGRHCKKFYTEEGCPYGESCTFLHDEA. The disordered stretch occupies residues 211-231; the sequence is LGPGGYGSGGGGGSGGGSVGG. Residues 212–231 are compositionally biased toward gly residues; it reads GPGGYGSGGGGGSGGGSVGG. A C3H1-type 3 zinc finger spans residues 260 to 288; sequence NWKTRICNKWEITGYCPFGAKCHFAHGAA. The tract at residues 299 to 335 is disordered; the sequence is EEEGKDGVSPNPDTKQTVQNPKGLSDTTTLLSPGVPH. Residues 309–329 are compositionally biased toward polar residues; sequence NPDTKQTVQNPKGLSDTTTLL.

The sequence is that of Zinc finger CCCH domain-containing protein 12 from Arabidopsis thaliana (Mouse-ear cress).